We begin with the raw amino-acid sequence, 169 residues long: Ferric-chelate reductase (NAD(P)H) (169 aa).

NADP(+) is bound at residue tyrosine 7. Residues 27–31 (QIANT), 45–52 (CLNKENDT), 82–84 (RKS), and lysine 89 contribute to the FMN site. Residues histidine 126 and 147 to 154 (YADYHLMK) contribute to the NADP(+) site.

It belongs to the non-flavoprotein flavin reductase family. As to quaternary structure, homodimer. It depends on FMN as a cofactor. The cofactor is FAD.

The enzyme catalyses 2 a Fe(II)-siderophore + NAD(+) + H(+) = 2 a Fe(III)-siderophore + NADH. The catalysed reaction is 2 a Fe(II)-siderophore + NADP(+) + H(+) = 2 a Fe(III)-siderophore + NADPH. Catalyzes the reduction of bound ferric iron (Fe(3+)) in a variety of iron chelators (siderophores) using NAD(P)H as the electron donor, resulting in the release of Fe(2+). Not active with uncomplexed Fe(3+). Also reduces FMN and FAD, but not riboflavin. The protein is Ferric-chelate reductase (NAD(P)H) of Archaeoglobus fulgidus (strain ATCC 49558 / DSM 4304 / JCM 9628 / NBRC 100126 / VC-16).